Here is a 524-residue protein sequence, read N- to C-terminus: GMP synthase [glutamine-hydrolyzing] (524 aa).

In terms of domain architecture, Glutamine amidotransferase type-1 spans 7–196 (PVLVVDFGAQ…LHELAGIPAS (190 aa)). Cys-84 serves as the catalytic Nucleophile. Residues His-170 and Glu-172 contribute to the active site. The region spanning 197–398 (WTPSNIADVL…LGLPEEIVAR (202 aa)) is the GMPS ATP-PPase domain. Residue 224–230 (SGGVDSA) coordinates ATP.

As to quaternary structure, homodimer.

The enzyme catalyses XMP + L-glutamine + ATP + H2O = GMP + L-glutamate + AMP + diphosphate + 2 H(+). The protein operates within purine metabolism; GMP biosynthesis; GMP from XMP (L-Gln route): step 1/1. Its function is as follows. Catalyzes the synthesis of GMP from XMP. The sequence is that of GMP synthase [glutamine-hydrolyzing] from Nocardia farcinica (strain IFM 10152).